The chain runs to 262 residues: NAD-dependent protein deacylase (262 aa).

One can recognise a Deacetylase sirtuin-type domain in the interval 1 to 262; that stretch reads MSNLRRAAEA…AALSPPGVPT (262 aa). Residue 22-42 participates in NAD(+) binding; the sequence is GAGISADSGIPTFRDKLTGLW. The substrate site is built by tyrosine 67 and arginine 70. 101–104 contacts NAD(+); sequence QNID. The active-site Proton acceptor is the histidine 119. Residues cysteine 127, cysteine 130, cysteine 155, and cysteine 158 each contribute to the Zn(2+) site. NAD(+) contacts are provided by residues 195 to 197, 221 to 223, and alanine 239; these read GTS and NLE.

This sequence belongs to the sirtuin family. Class III subfamily. Zn(2+) serves as cofactor.

The protein localises to the cytoplasm. The catalysed reaction is N(6)-acetyl-L-lysyl-[protein] + NAD(+) + H2O = 2''-O-acetyl-ADP-D-ribose + nicotinamide + L-lysyl-[protein]. The enzyme catalyses N(6)-succinyl-L-lysyl-[protein] + NAD(+) + H2O = 2''-O-succinyl-ADP-D-ribose + nicotinamide + L-lysyl-[protein]. In terms of biological role, NAD-dependent lysine deacetylase and desuccinylase that specifically removes acetyl and succinyl groups on target proteins. Modulates the activities of several proteins which are inactive in their acylated form. In Pseudomonas putida (strain ATCC 47054 / DSM 6125 / CFBP 8728 / NCIMB 11950 / KT2440), this protein is NAD-dependent protein deacylase.